The following is a 307-amino-acid chain: 4-diphosphocytidyl-2-C-methyl-D-erythritol kinase (307 aa).

The active site involves K9. An ATP-binding site is contributed by 94-104; sequence PIGAGLAGGSS. D136 is an active-site residue.

The protein belongs to the GHMP kinase family. IspE subfamily.

It catalyses the reaction 4-CDP-2-C-methyl-D-erythritol + ATP = 4-CDP-2-C-methyl-D-erythritol 2-phosphate + ADP + H(+). Its pathway is isoprenoid biosynthesis; isopentenyl diphosphate biosynthesis via DXP pathway; isopentenyl diphosphate from 1-deoxy-D-xylulose 5-phosphate: step 3/6. In terms of biological role, catalyzes the phosphorylation of the position 2 hydroxy group of 4-diphosphocytidyl-2C-methyl-D-erythritol. In Synechococcus sp. (strain CC9902), this protein is 4-diphosphocytidyl-2-C-methyl-D-erythritol kinase.